Reading from the N-terminus, the 554-residue chain is Arginine--tRNA ligase (554 aa).

A 'HIGH' region motif is present at residues 130–140 (ANPTGDLHIGH).

Belongs to the class-I aminoacyl-tRNA synthetase family. As to quaternary structure, monomer.

The protein localises to the cytoplasm. The enzyme catalyses tRNA(Arg) + L-arginine + ATP = L-arginyl-tRNA(Arg) + AMP + diphosphate. The chain is Arginine--tRNA ligase from Staphylococcus carnosus (strain TM300).